Consider the following 314-residue polypeptide: MANPERSYLSRFFSSQFSKLPYPSQSFKDAVILVTGGNTGLGLEAARHFVRLQAATVILAVRDLKKGEQAKLSIEESTKVQGVVEVWQVDLEDVRSVQSLAAKASSLPRLDVVVANAGISTNKWALVGDMERTIQVNVLSTFLLILALLPKMQEQDIEGQIRARPRVVVVSSEGHETTAFAERKAARIFDALRDQRQANMDERYDTSKLIQLYLVRALAERLSRSDKPPVTLNAVSPGLCKTGLLRETPLVARLLTGPVMAILARNAEEGSRTLVHAAAANDGETNGKYLRDYLQRLYAAKKATPRRRDCCRSF.

NADP(+) is bound by residues leucine 41, lysine 66, aspartate 90, and asparagine 116. Active-site proton donor residues include serine 171 and tyrosine 204. NADP(+)-binding residues include tyrosine 204 and lysine 208. Lysine 208 (lowers pKa of active site Tyr) is an active-site residue.

It belongs to the short-chain dehydrogenases/reductases (SDR) family.

Its pathway is secondary metabolite biosynthesis. Its function is as follows. Short chain dehydrogenase; part of the gene cluster that mediates the biosynthesis of aspercryptins, linear lipopeptides built from six amino acids including 2 highly unusual and nonproteogenic amino acids, 2-amino-octanoic acid (2aoa) and 2-amino-dodecanol (2adol). The core structure of aspercryptins is as follows: Ser/Ala-Thr-Ile/Val-2aoa-Asn-2adol. The first step of aspercryptin biosynthesis is the generation of the fatty acid precursors, octanoic and dodecanoic acids, by the FAS subunits atnF and atnM. The fatty acid precursors are likely transformed into the corresponding alpha-amino fatty acids in three steps. First, they are hydroxylated by the cytochrome P450 monooxygenase atnE, then oxidized to the corresponding alpha-keto acids by the NAD(P)-dependent oxidoreductase atnD, and finally converted to the alpha-amino fatty acids by the PLP-dependent aminotransferases atnH or atnJ. the alpha-amino fatty acids, 2-amino-octanoic and 2-amino-dodecanoic acids, are recognized, activated, and covalently tethered to the NRPS atnA by its fourth and sixth adenylation domains. The second module of atnA is the Thr module and contains an epimerase (E) domain responsible for the epimerization of Thr to D-allo-Thr. Additionally, despite atnA having only one epimerase domain, the first amino acid of aspercryptin A1 is D-Ser, suggesting that serine is either loaded directly as D-Ser on the first module or that the epimerase domain in the threonine module epimerizes both L-Ser and L-Thr. After condensation of the hexapeptide of aspercryptin, the C-terminal reductase (TE) domain might be involved in the reductive release and production of the aldehyde hexapeptide. Further reduction would generate aspercryptins. The variety of aspercryptins produced reflects the flexibility of the atnA NRPS, allowing incorporation of alanine instead of serine, valine for isoleucine, and a C10 fatty amino alcohol instead of the C12 version. AtnB seems to be involved in the selectivity for Ile versus Val by the third module. Moreover, type B, C and D aspercryptins have an additional N-terminal cichorine, acetyl and propionyl group respectively. The protein is Short chain dehydrogenase atnD of Emericella nidulans (strain FGSC A4 / ATCC 38163 / CBS 112.46 / NRRL 194 / M139) (Aspergillus nidulans).